Consider the following 360-residue polypeptide: NADP-dependent alcohol dehydrogenase 6 (360 aa).

Cysteine 46 is a Zn(2+) binding site. Residues glycine 47 and histidine 51 each coordinate NADP(+). Zn(2+) is bound by residues histidine 68, cysteine 100, cysteine 103, cysteine 106, and cysteine 114. Position 131 is a phosphoserine (serine 131). Cysteine 163 is a Zn(2+) binding site. Residues leucine 188, glycine 190, isoleucine 191, serine 210, arginine 211, lysine 215, cysteine 250, serine 252, threonine 255, aspartate 256, isoleucine 275, isoleucine 277, tyrosine 298, serine 299, leucine 301, and arginine 348 each contribute to the NADP(+) site. Phosphoserine is present on serine 359.

This sequence belongs to the zinc-containing alcohol dehydrogenase family. Homodimer. Zn(2+) serves as cofactor.

The protein resides in the cytoplasm. It localises to the nucleus. It catalyses the reaction a primary alcohol + NADP(+) = an aldehyde + NADPH + H(+). The catalysed reaction is (E)-cinnamyl alcohol + NADP(+) = (E)-cinnamaldehyde + NADPH + H(+). It carries out the reaction hexan-1-ol + NADP(+) = hexanal + NADPH + H(+). The enzyme catalyses 3-methylbutanol + NADP(+) = 3-methylbutanal + NADPH + H(+). It catalyses the reaction S-nitroso-CoA + NADPH + H(+) = sulfinamide-CoA + NADP(+). In terms of biological role, NADP-dependent, medium-chain alcohol dehydrogenase with a broad substrate specificity. Aldehydes exhibited 50-12000 times higher catalytic efficiency than the corresponding alcohols, therefore the major function of the enzyme is as an aldehyde reductase. The enzyme is active towards aromatic and aliphatic (linear and branched-chain) aldehydes. The enzyme is very active towards aromatic aldehydes, such as cinnamaldehyde, benzaldehyde and substituted benzaldehydes, such as veratraldehyde and panisaldehyde. It exhibits low activity towards substituted cinnamaldehydes, such as coniferaldehyde and sinapaldehyde. The enzyme has no activity with ketones, such as acetone or cyclohexanone. For the reverse reaction, linear and branched-chain primary alcohols are substrates, whereas very low activity is found with secondary alcohols, such as butan-2-ol. The enzyme may be physiologically involved in several steps of the lignin degradation pathway, initiated by other microorganisms, in the synthesis of fusel alcohols, products derived from the aminoacidic metabolism, and in the homeostasis of NADP(H). Has the ability to reduce 5-hydroxymethyl furfural (HMF), a furan derivative which is formed during the hydrolysis of lignocellulosic materials, to 5-hydroxymethylfurfuryl alcohol, thereby alleviating the inhibition of the fermentation of lignocellulose hydrolysates by HMF during fuel ethanol production. Also acts as an inhibitor of protein S-nitrosylation by mediating degradation of S-nitroso-coenzyme A (S-nitroso-CoA), a cofactor required to S-nitrosylate proteins. This is NADP-dependent alcohol dehydrogenase 6 from Saccharomyces cerevisiae (strain ATCC 204508 / S288c) (Baker's yeast).